The chain runs to 465 residues: Probable spore coat protein DDB_G0283555 (465 aa).

Residues 1–22 (MRINNLLVCLVLVFSTLSISNA) form the signal peptide. The region spanning 35 to 153 (RNCDSLSEDQ…RYPVCKGGGG (119 aa)) is the DSCP-N domain. 7 Follistatin-like domains span residues 160 to 182 (PCKN…AYCV), 195 to 217 (LCKA…ACCV), 229 to 251 (LCDA…ANCV), 257 to 280 (ECEH…PHCQ), 287 to 309 (LCRN…PTCI), 318 to 340 (PCRD…PSCV), and 435 to 458 (LCEF…PVCL).

In terms of biological role, may contribute to the structure of the coat at the interface between the middle, cellulosic layer and the outer, electron-dense, proteinaceous layer. The polypeptide is Probable spore coat protein DDB_G0283555 (Dictyostelium discoideum (Social amoeba)).